Consider the following 812-residue polypeptide: Mitochondrial intermediate peptidase (812 aa).

The N-terminal 29 residues, 1-29 (MRLSRQLLRSTPFLTRAKPVSGKVSHFRS), are a transit peptide targeting the mitochondrion. Residues 19 to 49 (PVSGKVSHFRSRTDLKGGSSNSSKSPDSVGD) form a disordered region. A compositionally biased stretch (low complexity) spans 37–46 (SSNSSKSPDS). Residue His595 participates in Zn(2+) binding. Glu596 is a catalytic residue. His599 and His602 together coordinate Zn(2+).

Belongs to the peptidase M3 family. Zn(2+) is required as a cofactor.

The protein localises to the mitochondrion matrix. The catalysed reaction is Release of an N-terminal octapeptide as second stage of processing of some proteins imported into the mitochondrion.. Cleaves proteins, imported into the mitochondrion, to their mature size. While most mitochondrial precursor proteins are processed to the mature form in one step by mitochondrial processing peptidase (MPP), the sequential cleavage by MIP of an octapeptide after initial processing by MPP is a required step for a subgroup of nuclear-encoded precursor proteins destined for the matrix or the inner membrane. The polypeptide is Mitochondrial intermediate peptidase (OCT1) (Scheffersomyces stipitis (strain ATCC 58785 / CBS 6054 / NBRC 10063 / NRRL Y-11545) (Yeast)).